The following is a 171-amino-acid chain: Adenine phosphoribosyltransferase (171 aa).

This sequence belongs to the purine/pyrimidine phosphoribosyltransferase family. Homodimer.

Its subcellular location is the cytoplasm. The enzyme catalyses AMP + diphosphate = 5-phospho-alpha-D-ribose 1-diphosphate + adenine. It participates in purine metabolism; AMP biosynthesis via salvage pathway; AMP from adenine: step 1/1. In terms of biological role, catalyzes a salvage reaction resulting in the formation of AMP, that is energically less costly than de novo synthesis. This chain is Adenine phosphoribosyltransferase, found in Citrifermentans bemidjiense (strain ATCC BAA-1014 / DSM 16622 / JCM 12645 / Bem) (Geobacter bemidjiensis).